The sequence spans 322 residues: UDP-galactose transporter homolog 1 (322 aa).

Transmembrane regions (helical) follow at residues 4–24, 43–63, 76–96, 105–125, and 129–149; these read FMRQLFVCMIGIYGSFLSWAV, ALLSLAQSFMTVLCGLLWNWF, FLGYFSSIAISASLSSYFGYA, TVILGKSCKLLPVIALHVFVY, and FPPHKYLIVTMITAGVSIFSY. An N-linked (GlcNAc...) asparagine glycan is attached at Asn-152. 4 helical membrane-spanning segments follow: residues 164–184, 199–219, 250–270, and 290–310; these read SPIGLLLLFFNLLMDGITNTT, MMIAVNLGIACLNGLYLISPF, LFIFFTLEKFGSITLVTITLT, and IQWLGILLVFLGISLEAGLKI. N-linked (GlcNAc...) asparagine glycosylation is found at Asn-313 and Asn-314.

Belongs to the nucleotide-sugar transporter family. SLC35B subfamily.

It localises to the endoplasmic reticulum membrane. May be involved in specific transport of UDP-Gal from the cytosol to the Golgi lumen. Involved in the maintenance of optimal conditions for the folding of secretory pathway proteins in the endoplasmic reticulum. This chain is UDP-galactose transporter homolog 1 (hut1), found in Schizosaccharomyces pombe (strain 972 / ATCC 24843) (Fission yeast).